The chain runs to 325 residues: Peroxidase 68 (325 aa).

The N-terminal stretch at 1 to 28 (MECYEQSRQRAAFVVLLFIVMLGSQAQA) is a signal peptide. Glutamine 29 carries the post-translational modification Pyrrolidone carboxylic acid. Cystine bridges form between cysteine 39-cysteine 119, cysteine 72-cysteine 77, cysteine 125-cysteine 321, and cysteine 205-cysteine 230. The active-site Proton acceptor is the histidine 70. Residues aspartate 71, valine 74, glycine 76, aspartate 78, and serine 80 each coordinate Ca(2+). Asparagine 99 carries N-linked (GlcNAc...) asparagine glycosylation. Proline 168 contributes to the substrate binding site. Residue histidine 198 participates in heme b binding. Threonine 199 is a Ca(2+) binding site. An N-linked (GlcNAc...) asparagine glycan is attached at asparagine 214. Residues aspartate 245, threonine 248, and aspartate 253 each contribute to the Ca(2+) site.

It belongs to the peroxidase family. Classical plant (class III) peroxidase subfamily. The cofactor is heme b. Ca(2+) is required as a cofactor.

The protein resides in the secreted. It catalyses the reaction 2 a phenolic donor + H2O2 = 2 a phenolic radical donor + 2 H2O. Functionally, removal of H(2)O(2), oxidation of toxic reductants, biosynthesis and degradation of lignin, suberization, auxin catabolism, response to environmental stresses such as wounding, pathogen attack and oxidative stress. These functions might be dependent on each isozyme/isoform in each plant tissue. The chain is Peroxidase 68 (PER68) from Arabidopsis thaliana (Mouse-ear cress).